The primary structure comprises 399 residues: Lipase member K (399 aa).

The N-terminal stretch at 1-19 (MWQLLAAACWMLLLGSMYG) is a signal peptide. In terms of domain architecture, AB hydrolase-1 spans 78-378 (PAVYLQHGLI…HYNHVDFYLG (301 aa)). The Nucleophile role is filled by Ser-172. The cysteines at positions 246 and 255 are disulfide-linked. Residues Asn-271 and Asn-327 are each glycosylated (N-linked (GlcNAc...) asparagine). Residues Asp-343 and His-372 each act as charge relay system in the active site.

This sequence belongs to the AB hydrolase superfamily. Lipase family. As to expression, exclusively expressed in the epidermis within the granular keratinocytes.

It is found in the secreted. In terms of biological role, plays a highly specific role in the last step of keratinocyte differentiation. May have an essential function in lipid metabolism of the most differentiated epidermal layers. The protein is Lipase member K (LIPK) of Homo sapiens (Human).